Here is a 350-residue protein sequence, read N- to C-terminus: tRNA uridine(34) hydroxylase (350 aa).

The 95-residue stretch at 146–240 (DDPDAVFIDM…YARRAREQGL (95 aa)) folds into the Rhodanese domain. Cysteine 200 serves as the catalytic Cysteine persulfide intermediate. Over residues 319–328 (RRRRAGRENG) the composition is skewed to basic and acidic residues. The segment at 319 to 350 (RRRRAGRENGNKIFNKSRGRLNSKLSIPDPAE) is disordered.

It belongs to the TrhO family.

The enzyme catalyses uridine(34) in tRNA + AH2 + O2 = 5-hydroxyuridine(34) in tRNA + A + H2O. Its function is as follows. Catalyzes oxygen-dependent 5-hydroxyuridine (ho5U) modification at position 34 in tRNAs. The sequence is that of tRNA uridine(34) hydroxylase from Salmonella typhi.